Reading from the N-terminus, the 209-residue chain is Uracil phosphoribosyltransferase (209 aa).

5-phospho-alpha-D-ribose 1-diphosphate is bound by residues Arg79, Arg104, and 131 to 139 (DPMLATGGS). Uracil-binding positions include Ile194 and 199–201 (GDA). Asp200 provides a ligand contact to 5-phospho-alpha-D-ribose 1-diphosphate.

This sequence belongs to the UPRTase family. In terms of assembly, homodimer. It depends on Mg(2+) as a cofactor.

The catalysed reaction is UMP + diphosphate = 5-phospho-alpha-D-ribose 1-diphosphate + uracil. It functions in the pathway pyrimidine metabolism; UMP biosynthesis via salvage pathway; UMP from uracil: step 1/1. Its activity is regulated as follows. Allosterically activated by GTP. In terms of biological role, catalyzes the conversion of uracil and 5-phospho-alpha-D-ribose 1-diphosphate (PRPP) to UMP and diphosphate. The chain is Uracil phosphoribosyltransferase from Bacillus caldolyticus.